An 85-amino-acid polypeptide reads, in one-letter code: Probable Sec-independent protein translocase protein TatE (85 aa).

The chain crosses the membrane as a helical span at residues 1 to 21 (MEGLSITKLLVVGILIVLLFG). Residues 64–85 (KTVAETKAASDSQAAASVERKD) form a disordered region.

The protein belongs to the TatA/E family. TatE subfamily.

The protein localises to the cell inner membrane. Its function is as follows. Part of the twin-arginine translocation (Tat) system that transports large folded proteins containing a characteristic twin-arginine motif in their signal peptide across membranes. TatE shares overlapping functions with TatA. This Yersinia pestis protein is Probable Sec-independent protein translocase protein TatE.